We begin with the raw amino-acid sequence, 386 residues long: Succinate--CoA ligase [ADP-forming] subunit beta (386 aa).

The region spanning 9-244 (KQILKKYGAV…LNEEDPTEID (236 aa)) is the ATP-grasp domain. ATP contacts are provided by residues lysine 46, 53–55 (GRG), glutamate 99, serine 102, and glutamate 107. Residues asparagine 199 and aspartate 213 each contribute to the Mg(2+) site. Residues asparagine 264 and 321 to 323 (GIM) contribute to the substrate site.

This sequence belongs to the succinate/malate CoA ligase beta subunit family. As to quaternary structure, heterotetramer of two alpha and two beta subunits. Requires Mg(2+) as cofactor.

The catalysed reaction is succinate + ATP + CoA = succinyl-CoA + ADP + phosphate. The enzyme catalyses GTP + succinate + CoA = succinyl-CoA + GDP + phosphate. It participates in carbohydrate metabolism; tricarboxylic acid cycle; succinate from succinyl-CoA (ligase route): step 1/1. Its function is as follows. Succinyl-CoA synthetase functions in the citric acid cycle (TCA), coupling the hydrolysis of succinyl-CoA to the synthesis of either ATP or GTP and thus represents the only step of substrate-level phosphorylation in the TCA. The beta subunit provides nucleotide specificity of the enzyme and binds the substrate succinate, while the binding sites for coenzyme A and phosphate are found in the alpha subunit. The protein is Succinate--CoA ligase [ADP-forming] subunit beta of Pelagibacter ubique (strain HTCC1062).